The chain runs to 319 residues: Cobalamin biosynthesis protein CbiB (319 aa).

A run of 5 helical transmembrane segments spans residues 52–74 (IGGG…GVLA), 79–101 (IHPW…GRSL), 155–177 (GIIA…YKAV), 207–229 (YLPA…LSGW), and 296–318 (LMWV…LSGV).

This sequence belongs to the CobD/CbiB family.

It localises to the cell membrane. It participates in cofactor biosynthesis; adenosylcobalamin biosynthesis; adenosylcobalamin from cob(II)yrinate a,c-diamide: step 4/7. Converts cobyric acid to cobinamide by the addition of aminopropanol on the F carboxylic group. However, the true cosubstrate could be (R)-1-amino-2-propanol O-2-phosphate, leading to cobinamide phosphate. This is Cobalamin biosynthesis protein CbiB from Salmonella typhi.